A 128-amino-acid chain; its full sequence is Large ribosomal subunit protein bL19 (128 aa).

Belongs to the bacterial ribosomal protein bL19 family.

This protein is located at the 30S-50S ribosomal subunit interface and may play a role in the structure and function of the aminoacyl-tRNA binding site. The sequence is that of Large ribosomal subunit protein bL19 from Azoarcus sp. (strain BH72).